The sequence spans 79 residues: Small ribosomal subunit protein uS17 (79 aa).

It belongs to the universal ribosomal protein uS17 family. Part of the 30S ribosomal subunit.

Functionally, one of the primary rRNA binding proteins, it binds specifically to the 5'-end of 16S ribosomal RNA. This Bartonella quintana (strain Toulouse) (Rochalimaea quintana) protein is Small ribosomal subunit protein uS17.